Reading from the N-terminus, the 528-residue chain is Probable serine/threonine-protein kinase 380R (528 aa).

The interval V70 to S96 is disordered. Basic residues predominate over residues P73–V95. A Protein kinase domain is found at F156–F507. Residues V162 to V170 and K187 contribute to the ATP site. D302 (proton acceptor) is an active-site residue.

This sequence belongs to the protein kinase superfamily. Ser/Thr protein kinase family.

It carries out the reaction L-seryl-[protein] + ATP = O-phospho-L-seryl-[protein] + ADP + H(+). The catalysed reaction is L-threonyl-[protein] + ATP = O-phospho-L-threonyl-[protein] + ADP + H(+). The polypeptide is Probable serine/threonine-protein kinase 380R (Invertebrate iridescent virus 6 (IIV-6)).